Reading from the N-terminus, the 101-residue chain is Small ribosomal subunit protein uS14 (101 aa).

The tract at residues 1–23 (MAKKSSVEKNKRRRKMVAQQAPK) is disordered.

The protein belongs to the universal ribosomal protein uS14 family. As to quaternary structure, part of the 30S ribosomal subunit. Contacts proteins S3 and S10.

Functionally, binds 16S rRNA, required for the assembly of 30S particles and may also be responsible for determining the conformation of the 16S rRNA at the A site. This is Small ribosomal subunit protein uS14 from Rhodospirillum centenum (strain ATCC 51521 / SW).